We begin with the raw amino-acid sequence, 485 residues long: Glutamyl-tRNA(Gln) amidotransferase subunit A (485 aa).

Active-site charge relay system residues include Lys78 and Ser153. Residue Ser177 is the Acyl-ester intermediate of the active site.

The protein belongs to the amidase family. GatA subfamily. In terms of assembly, heterotrimer of A, B and C subunits.

The enzyme catalyses L-glutamyl-tRNA(Gln) + L-glutamine + ATP + H2O = L-glutaminyl-tRNA(Gln) + L-glutamate + ADP + phosphate + H(+). Allows the formation of correctly charged Gln-tRNA(Gln) through the transamidation of misacylated Glu-tRNA(Gln) in organisms which lack glutaminyl-tRNA synthetase. The reaction takes place in the presence of glutamine and ATP through an activated gamma-phospho-Glu-tRNA(Gln). The protein is Glutamyl-tRNA(Gln) amidotransferase subunit A of Geobacter metallireducens (strain ATCC 53774 / DSM 7210 / GS-15).